The primary structure comprises 370 residues: 3-dehydroquinate synthase (370 aa).

Residues 112-116, 136-137, Lys149, Lys158, and 176-179 contribute to the NAD(+) site; these read GVVGD, TS, and TLRT. Residues Glu191, His254, and His276 each contribute to the Zn(2+) site.

The protein belongs to the sugar phosphate cyclases superfamily. Dehydroquinate synthase family. It depends on NAD(+) as a cofactor. The cofactor is Co(2+). Zn(2+) is required as a cofactor.

The protein resides in the cytoplasm. It carries out the reaction 7-phospho-2-dehydro-3-deoxy-D-arabino-heptonate = 3-dehydroquinate + phosphate. The protein operates within metabolic intermediate biosynthesis; chorismate biosynthesis; chorismate from D-erythrose 4-phosphate and phosphoenolpyruvate: step 2/7. Functionally, catalyzes the conversion of 3-deoxy-D-arabino-heptulosonate 7-phosphate (DAHP) to dehydroquinate (DHQ). This is 3-dehydroquinate synthase from Xanthomonas axonopodis pv. citri (strain 306).